The sequence spans 336 residues: Nitrilase (336 aa).

A CN hydrolase domain is found at 5–278 (LKVACVQAAP…EGLLYATLDP (274 aa)). The Proton acceptor role is filled by E45. Catalysis depends on K127, which acts as the Proton donor. The Nucleophile role is filled by C161.

Belongs to the carbon-nitrogen hydrolase superfamily. Nitrilase family.

It carries out the reaction a nitrile + 2 H2O = a carboxylate + NH4(+). It catalyses the reaction (indol-3-yl)acetonitrile + 2 H2O = (indol-3-yl)acetate + NH4(+). The catalysed reaction is phenylpropanonitrile + 2 H2O = 3-phenylpropanoate + NH4(+). In terms of biological role, arylacetonitrilase which is capable of hydrolyzing indole-3-acetonitrile (IAN) to the plant hormone indole-3-acetate (IAA), and allows the plant pathogenic bacterium to use IAN as a sole nitrogen source. Is also able to hydrolyze phenylpropionitrile (PPN), allowing the use of this compound as a sole nitrogen source. This enzyme may represent an additional mechanism for IAA biosynthesis or may be used to degrade and assimilate aldoximes and nitriles produced during host plant secondary metabolism. This chain is Nitrilase, found in Pseudomonas syringae pv. syringae (strain B728a).